We begin with the raw amino-acid sequence, 434 residues long: Putative G3BP-like protein (434 aa).

An NTF2 domain is found at 18-134 (IGWMFVQEYY…YFVLNDIFRF (117 aa)). 2 disordered regions span residues 141 to 180 (EEEESPDAVEKEKKDVASEPYVNGVQSQEHLPSAKEEGHY) and 274 to 308 (VKSQASVSSTASTTGQTVKGVNADQTQQPTAPYTQ). At Ser145 the chain carries Phosphoserine. A compositionally biased stretch (basic and acidic residues) spans 148–157 (AVEKEKKDVA). A compositionally biased stretch (low complexity) spans 276–291 (SQASVSSTASTTGQTV). Residues 296 to 308 (ADQTQQPTAPYTQ) show a composition bias toward polar residues. In terms of domain architecture, RRM spans 315–386 (TSVFVKNIPP…ATLNIEERRR (72 aa)). A disordered region spans residues 390 to 434 (GKFNKSGDKKSNDNYNGMKRNFRKGNRGAFDGRSKEVTTSKKQNN). Residues 419–428 (FDGRSKEVTT) are compositionally biased toward basic and acidic residues.

Functionally, probable scaffold protein that may be involved in mRNA transport. This is Putative G3BP-like protein (nxt3) from Schizosaccharomyces pombe (strain 972 / ATCC 24843) (Fission yeast).